The sequence spans 335 residues: NADH-quinone oxidoreductase subunit H (335 aa).

Helical transmembrane passes span 12–32 (IIAV…GALL), 81–101 (VIFT…FAVI), 114–134 (IGLL…LFAG), 154–174 (VSYE…VGSF), 187–207 (LWFI…GVAV), 238–258 (FFVG…TLFF), 270–290 (SLAF…FILL), and 307–327 (WKFC…IVLL).

Belongs to the complex I subunit 1 family. As to quaternary structure, NDH-1 is composed of 13 different subunits. Subunits NuoA, H, J, K, L, M, N constitute the membrane sector of the complex.

The protein resides in the cell inner membrane. It catalyses the reaction a quinone + NADH + 5 H(+)(in) = a quinol + NAD(+) + 4 H(+)(out). Its function is as follows. NDH-1 shuttles electrons from NADH, via FMN and iron-sulfur (Fe-S) centers, to quinones in the respiratory chain. The immediate electron acceptor for the enzyme in this species is believed to be ubiquinone. Couples the redox reaction to proton translocation (for every two electrons transferred, four hydrogen ions are translocated across the cytoplasmic membrane), and thus conserves the redox energy in a proton gradient. This subunit may bind ubiquinone. This chain is NADH-quinone oxidoreductase subunit H, found in Pseudomonas syringae pv. tomato (strain ATCC BAA-871 / DC3000).